Reading from the N-terminus, the 379-residue chain is Deoxyhypusine synthase (379 aa).

NAD(+) contacts are provided by residues 108–112 (SNLIS), 134–136 (TAG), Glu-140, and Asp-257. 139-140 (EE) provides a ligand contact to spermidine. Asp-262 is a spermidine binding site. Position 304 (Gly-304) interacts with NAD(+). Spermidine is bound at residue His-309. 329–330 (TG) is a binding site for NAD(+). Residues 335–337 (GSD) and 344–350 (EAVSWGK) contribute to the spermidine site. The active-site Nucleophile is the Lys-350. NAD(+) is bound at residue 363 to 364 (DA).

The protein belongs to the deoxyhypusine synthase family. The cofactor is NAD(+).

It catalyses the reaction [eIF5A protein]-L-lysine + spermidine = [eIF5A protein]-deoxyhypusine + propane-1,3-diamine. Its pathway is protein modification; eIF5A hypusination. Its function is as follows. Catalyzes the NAD-dependent oxidative cleavage of spermidine and the subsequent transfer of the butylamine moiety of spermidine to the epsilon-amino group of a specific lysine residue of the eIF-5A precursor protein to form the intermediate deoxyhypusine residue. This chain is Deoxyhypusine synthase (DYS1), found in Kluyveromyces lactis (strain ATCC 8585 / CBS 2359 / DSM 70799 / NBRC 1267 / NRRL Y-1140 / WM37) (Yeast).